We begin with the raw amino-acid sequence, 96 residues long: Small ribosomal subunit protein bS20 (96 aa).

The protein belongs to the bacterial ribosomal protein bS20 family.

In terms of biological role, binds directly to 16S ribosomal RNA. This Thermotoga petrophila (strain ATCC BAA-488 / DSM 13995 / JCM 10881 / RKU-1) protein is Small ribosomal subunit protein bS20.